The sequence spans 20 residues: Toxin b subunit beta (20 aa).

In terms of assembly, toxin b is a heterodimer composed of toxin alpha and toxin beta. In terms of tissue distribution, expressed by the venom gland.

Its subcellular location is the secreted. Functionally, binds to sodium channels (Nav) and affects the channel activation process. This is Toxin b subunit beta from Androctonus crassicauda (Arabian fat-tailed scorpion).